A 509-amino-acid chain; its full sequence is Lysine--tRNA ligase (509 aa).

Residues Glu-419 and Glu-426 each contribute to the Mg(2+) site.

Belongs to the class-II aminoacyl-tRNA synthetase family. Homodimer. Requires Mg(2+) as cofactor.

The protein resides in the cytoplasm. The catalysed reaction is tRNA(Lys) + L-lysine + ATP = L-lysyl-tRNA(Lys) + AMP + diphosphate. This Methylobacillus flagellatus (strain ATCC 51484 / DSM 6875 / VKM B-1610 / KT) protein is Lysine--tRNA ligase.